Consider the following 258-residue polypeptide: 5'-nucleotidase SurE (258 aa).

Residues Asp-18, Asp-19, Ser-49, and Asn-102 each contribute to the a divalent metal cation site.

This sequence belongs to the SurE nucleotidase family. It depends on a divalent metal cation as a cofactor.

The protein localises to the cytoplasm. It catalyses the reaction a ribonucleoside 5'-phosphate + H2O = a ribonucleoside + phosphate. In terms of biological role, nucleotidase that shows phosphatase activity on nucleoside 5'-monophosphates. The polypeptide is 5'-nucleotidase SurE (Vibrio parahaemolyticus serotype O3:K6 (strain RIMD 2210633)).